An 89-amino-acid polypeptide reads, in one-letter code: Small ribosomal subunit protein uS15 (89 aa).

Belongs to the universal ribosomal protein uS15 family. Part of the 30S ribosomal subunit. Forms a bridge to the 50S subunit in the 70S ribosome, contacting the 23S rRNA.

Functionally, one of the primary rRNA binding proteins, it binds directly to 16S rRNA where it helps nucleate assembly of the platform of the 30S subunit by binding and bridging several RNA helices of the 16S rRNA. In terms of biological role, forms an intersubunit bridge (bridge B4) with the 23S rRNA of the 50S subunit in the ribosome. The protein is Small ribosomal subunit protein uS15 of Photorhabdus laumondii subsp. laumondii (strain DSM 15139 / CIP 105565 / TT01) (Photorhabdus luminescens subsp. laumondii).